The chain runs to 234 residues: Myelin protein zero-like protein 3 (234 aa).

A signal peptide spans 1 to 31 (MQQSGVPGSRGCALCPLLGVLFFQGVYVIFS). Positions 32 to 148 (LEIKADAHVR…NIPATELTVT (117 aa)) constitute an Ig-like V-type domain. The Extracellular portion of the chain corresponds to 32–158 (LEIKADAHVR…ERGFGTMLSS (127 aa)). A disulfide bridge links Cys-52 with Cys-128. N-linked (GlcNAc...) asparagine glycosylation is present at Asn-123. The chain crosses the membrane as a helical span at residues 159–179 (VALLSILVFIPSTVVVILLLV). The Cytoplasmic portion of the chain corresponds to 180–234 (RMGRKSAGLKKRSKSGYKKSSIEVSDDTDQEGDDCMAKLCVRCAECVDSDYEETY).

It belongs to the myelin P0 protein family.

Its subcellular location is the membrane. Mediates homophilic cell-cell adhesion. This Bos taurus (Bovine) protein is Myelin protein zero-like protein 3 (MPZL3).